The primary structure comprises 133 residues: Aspartate 1-decarboxylase (133 aa).

The Schiff-base intermediate with substrate; via pyruvic acid role is filled by S26. S26 is subject to Pyruvic acid (Ser). Residue T58 participates in substrate binding. Y59 functions as the Proton donor in the catalytic mechanism. G74–A76 provides a ligand contact to substrate.

This sequence belongs to the PanD family. Heterooctamer of four alpha and four beta subunits. It depends on pyruvate as a cofactor. In terms of processing, is synthesized initially as an inactive proenzyme, which is activated by self-cleavage at a specific serine bond to produce a beta-subunit with a hydroxyl group at its C-terminus and an alpha-subunit with a pyruvoyl group at its N-terminus.

It localises to the cytoplasm. It catalyses the reaction L-aspartate + H(+) = beta-alanine + CO2. It participates in cofactor biosynthesis; (R)-pantothenate biosynthesis; beta-alanine from L-aspartate: step 1/1. Its function is as follows. Catalyzes the pyruvoyl-dependent decarboxylation of aspartate to produce beta-alanine. This chain is Aspartate 1-decarboxylase, found in Legionella pneumophila (strain Paris).